Here is a 390-residue protein sequence, read N- to C-terminus: MASSLEKLISSFLLVLYSTTIIVASSESRCRRFKSIISFGDSIADTGNYLHLSDVNHLPQSAFLPYGESFFHPPSGRYSDGRLIIDFIAEFLGLPYVPSYFGSQNVSFDQGINFAVYGATALDRVFLVGKGIESDFTNVSLSVQLNIFKQILPNLCTSSSRDCREMLGDSLILMGEIGVNDYNYPFFEGKSINEIKQLVPLVIKAISSAIVDLIDLGGKTFLVPGNFPLGCYPAYLTLFQTAAEEDHDPFTGCIPRLNEFGEYHNEQLKTELKRLQELYDHVNIIYADYYNSLFRLYQEPVKYGFKNRPLAACCGVGGQYNFTIGKECGHRGVSCCQNPSEYVNWDGYHLTEATHQKMAQVILNGTYASPAFDWSCSGSESVDKEYSFSS.

A signal peptide spans 1-26 (MASSLEKLISSFLLVLYSTTIIVASS). Ser42 acts as the Nucleophile in catalysis. 3 N-linked (GlcNAc...) asparagine glycosylation sites follow: Asn105, Asn138, and Asn321. Active-site residues include Asp346 and His349. The N-linked (GlcNAc...) asparagine glycan is linked to Asn364.

The protein belongs to the 'GDSL' lipolytic enzyme family.

The protein localises to the secreted. The polypeptide is GDSL esterase/lipase At1g28640 (Arabidopsis thaliana (Mouse-ear cress)).